The sequence spans 277 residues: Elongation factor 1-delta (277 aa).

Ala2 carries the N-acetylalanine modification. Lys17 is modified (N6-acetyllysine). Ser37, Ser44, Ser60, Ser86, and Ser106 each carry phosphoserine. Lys107 carries the N6-acetyllysine modification. Positions 113–171 (SALEKSSPAHRATTPQTQHVSPMRQVEPPSRKAATATEDDEDDDIDLFGSDEEEDKEAA) are disordered. Lys117 bears the N6-acetyllysine; alternate mark. An N6-succinyllysine; alternate modification is found at Lys117. At Ser119 the chain carries Phosphoserine. Thr129 bears the Phosphothreonine mark. Ser133 carries the phosphoserine modification. Thr147 carries the phosphothreonine modification. The span at 149–168 (TEDDEDDDIDLFGSDEEEDK) shows a compositional bias: acidic residues. The residue at position 162 (Ser162) is a Phosphoserine; by CK2.

It belongs to the EF-1-beta/EF-1-delta family. In terms of assembly, EF-1 is composed of 4 subunits: alpha, beta, delta, and gamma.

Functionally, EF-1-beta and EF-1-delta stimulate the exchange of GDP bound to EF-1-alpha to GTP. The protein is Elongation factor 1-delta (EEF1D) of Ovis aries (Sheep).